A 108-amino-acid chain; its full sequence is Thioredoxin C-2 (108 aa).

A Thioredoxin domain is found at 2-108 (SATIVNTTDE…KLAAFIDQNI (107 aa)). A disulfide bridge connects residues C33 and C36.

It belongs to the thioredoxin family.

Participates in various redox reactions through the reversible oxidation of its active center dithiol to a disulfide and catalyzes dithiol-disulfide exchange reactions. This chain is Thioredoxin C-2, found in Corynebacterium nephridii.